The sequence spans 210 residues: Nta operon transcriptional regulator (210 aa).

In terms of domain architecture, HTH gntR-type spans 1–55 (MAVSYHFRPGERINEVELAAQLKVSRTPLREALNRLTTEGFLTTTANKGFFARVL). Positions 15–34 (EVELAAQLKVSRTPLREALN) form a DNA-binding region, H-T-H motif.

In terms of biological role, probable regulator for the expression of the NTA monooxygenase subunits. The chain is Nta operon transcriptional regulator (ntaR) from Aminobacter aminovorans (Chelatobacter heintzii).